A 585-amino-acid polypeptide reads, in one-letter code: Cysteine/serine-rich nuclear protein 3 (585 aa).

Disordered stretches follow at residues 1-52 (MSGI…TPSS) and 335-395 (ELDC…GFVE). Positions 30–40 (SSESADSGDSV) are enriched in low complexity. Residues 41-52 (NPSTSSHFTPSS) are compositionally biased toward polar residues. Acidic residues predominate over residues 335-349 (ELDCQGEEEEEEEDG). The segment covering 351–366 (SFCSGVTDSSTQSLAP) has biased composition (polar residues). Residues 368-389 (ESDEEEEEEEEEEEEEDDDDDK) show a composition bias toward acidic residues.

It belongs to the AXUD1 family.

Its subcellular location is the nucleus. Its function is as follows. Binds to the consensus sequence 5'-AGAGTG-3' and has transcriptional activator activity. Plays a role in apoptosis. The polypeptide is Cysteine/serine-rich nuclear protein 3 (CSRNP3) (Homo sapiens (Human)).